The chain runs to 496 residues: Cytochrome P450 71B12 (496 aa).

A helical membrane pass occupies residues 2–22 (SLWYIIVAFVFFSSMIIVRII). Heme is bound at residue C436.

It belongs to the cytochrome P450 family. Heme serves as cofactor.

It is found in the membrane. The polypeptide is Cytochrome P450 71B12 (CYP71B12) (Arabidopsis thaliana (Mouse-ear cress)).